The chain runs to 480 residues: MLAVRNMKFGIFLLWWGWVLAAESTVHWPGREVHEPSKKGSRPQRQRRGAHDDAHKQGSPILKRSSDITKSPLTKSEQLLRIDDHDFSMRPGFGGPAIPVGVDVQVESLDSISEVDMDFTMTLYLRHYWKDERLSFPSTNNLSMTFDGRLVKKIWVPDMFFVHSKRSFIHDTTTDNVMLRVQPDGKVLYSLRVTVTAMCNMDFSRFPLDTQTCSLEIESYAYTEDDLMLYWKKGNDSLKTDERISLSQFLIQEFHTTTKLAFYSSTGWYNRLYINFTLRRHIFFFLLQTYFPATLMVMLSWVSFWIDRRAVPARVPLGITTVLTMSTIITGVNASMPRVSYIKAVDIYLWVSFVFVFLSVLEYAAVNYLTTVQERKERKLREKISCTCGLPQPRGVMLDSSYSDGEVNDLGGYMPENGEKPDRMMVQLTLASERGSPQRKSQRGSYVSMRINTHAIDKYSRIIFPAAYILFNLIYWSIFS.

The N-terminal stretch at 1–21 (MLAVRNMKFGIFLLWWGWVLA) is a signal peptide. Residues 22–281 (AESTVHWPGR…LYINFTLRRH (260 aa)) are Extracellular-facing. The segment at 31–67 (REVHEPSKKGSRPQRQRRGAHDDAHKQGSPILKRSSD) is disordered. The span at 39-48 (KGSRPQRQRR) shows a compositional bias: basic residues. Arg-126 contributes to the 4-aminobutanoate binding site. Asn-141 is a glycosylation site (N-linked (GlcNAc...) asparagine). Residue Ser-190 coordinates 4-aminobutanoate. Cysteines 199 and 213 form a disulfide. Glu-218 provides a ligand contact to 4-aminobutanoate. N-linked (GlcNAc...) asparagine glycosylation is found at Asn-235 and Asn-275. A helical transmembrane segment spans residues 282–302 (IFFFLLQTYFPATLMVMLSWV). Residues 303–314 (SFWIDRRAVPAR) lie on the Cytoplasmic side of the membrane. Residues 315–335 (VPLGITTVLTMSTIITGVNAS) form a helical membrane-spanning segment. Residues 336–346 (MPRVSYIKAVD) lie on the Extracellular side of the membrane. A helical membrane pass occupies residues 347 to 367 (IYLWVSFVFVFLSVLEYAAVN). The Cytoplasmic segment spans residues 368–458 (YLTTVQERKE…MRINTHAIDK (91 aa)). A helical membrane pass occupies residues 459 to 479 (YSRIIFPAAYILFNLIYWSIF). A topological domain (extracellular) is located at residue Ser-480.

The protein belongs to the ligand-gated ion channel (TC 1.A.9) family. Gamma-aminobutyric acid receptor (TC 1.A.9.5) subfamily. GABRR1 sub-subfamily. In terms of assembly, three rho subunits (rho-1/GBRR1, rho-2/GBRR2 and rho-3/GBRR3) coassemble either to form functional homopentamers or heteropentamers. Rho-1/GBRR1 subunits can also associate with alpha-1/GBRA1 subunits to form a functional GABAAR. Interacts with SQSTM1.

It localises to the postsynaptic cell membrane. The protein resides in the cell membrane. It catalyses the reaction chloride(in) = chloride(out). With respect to regulation, inhibited by TPMPA, a rho-specific antagonist. Inhibited by picrotoxin, when forming a homopentamer. In contrast with other GABAARs, rho-1 GABAAR is not inhibited by bicuculline, when forming a homopentamer. Down-regulated by external protons when forming a homopentamer. In terms of biological role, rho subunit of the pentameric ligand-gated chloride channels responsible for mediating the effects of gamma-aminobutyric acid (GABA), the major inhibitory neurotransmitter in the brain. Rho-containing GABA-gated chloride channels are a subclass of GABA(A) receptors (GABAARs) entirely composed of rho subunits, where GABA molecules bind at the rho intersubunit interfaces. When activated by GABA, rho-GABAARs selectively allow the flow of chloride anions across the cell membrane down their electrochemical gradient. Rho-1 subunits are primarily expressed in retina where rho-1-containing GABAARs may play a role in retinal neurotransmission. Rho-1 GABAARs are also involved in neuronal tonic (extrasynaptic) and phasic (synaptic) transmission in the Purkinje neurons of the cerebellum. Rho-1 GABAARs may also contribute to the regulation of glial development in the cerebellum by controlling extrasynaptic transmission. This is Gamma-aminobutyric acid receptor subunit rho-1 from Rattus norvegicus (Rat).